The following is a 314-amino-acid chain: NADH-ubiquinone oxidoreductase chain 1 (314 aa).

A run of 8 helical transmembrane segments spans residues 5 to 25 (IMPL…VAFL), 78 to 98 (FSPV…PYLI), 105 to 125 (LGVL…MIAG), 152 to 172 (ALIL…SFYF), 176 to 196 (YVWF…SCLA), 227 to 247 (LIFL…VVIF), 251 to 271 (DIYS…FIWV), and 294 to 314 (LSLN…SLLF).

The protein belongs to the complex I subunit 1 family.

Its subcellular location is the mitochondrion inner membrane. The catalysed reaction is a ubiquinone + NADH + 5 H(+)(in) = a ubiquinol + NAD(+) + 4 H(+)(out). Core subunit of the mitochondrial membrane respiratory chain NADH dehydrogenase (Complex I) that is believed to belong to the minimal assembly required for catalysis. Complex I functions in the transfer of electrons from NADH to the respiratory chain. The immediate electron acceptor for the enzyme is believed to be ubiquinone. This is NADH-ubiquinone oxidoreductase chain 1 (mt:ND1) from Anopheles gambiae (African malaria mosquito).